We begin with the raw amino-acid sequence, 307 residues long: Thioredoxin reductase (307 aa).

Position 36–43 (36–43 (DNAAPGGK)) interacts with FAD. A disulfide bridge links cysteine 138 with cysteine 141. 278 to 287 (DIRIKDIRQI) is an FAD binding site.

Belongs to the class-II pyridine nucleotide-disulfide oxidoreductase family. As to quaternary structure, homodimer. FAD is required as a cofactor.

It is found in the cytoplasm. The catalysed reaction is [thioredoxin]-dithiol + NADP(+) = [thioredoxin]-disulfide + NADPH + H(+). This Mycoplasmopsis pulmonis (strain UAB CTIP) (Mycoplasma pulmonis) protein is Thioredoxin reductase (trxB).